Here is a 1501-residue protein sequence, read N- to C-terminus: MMYLPYAQLPDPTDKFEIYEEIAQGVNAKVFRAKELDNDRIVALKIQHYDEEHQVSIEEEYRTLRDYCDHPNLPEFYGVYKLSKPNGPDEIWFVMEYCAGGTAVDMVNKLLKLDRRMREEHIAYIIRETCRAAIELNRNHVLHRDIRGDNILLTKNGRVKLCDFGLSRQVDSTLGKRGTCIGSPCWMAPEVVSAMESREPDITVRADVWALGITTIELADGKPPFADMHPTRAMFQIIRNPPPTLMRPTNWSQQINDFISESLEKNAENRPMMVEMVEHPFLTELIENEDEMRSDIAEMLELSRDVKTLYKEPELFVDRGYVKRFDEKPEKMYPEDLAALENPVDENIIESLRHRILMGESYSFIGDILLSLNSNEIKQEFPQEFHAKYRFKSRSENQPHIFSVADIAYQDMLHHKEPQHIVLSGESYSGKSTNARLLIKHLCYLGDGNRGATGRVESSIKAILMLVNAGTPVNNDSTRCVLQYCLTFGKTGKMSGAVFNMYMLEKLRVATTDGTQHNFHIFYYFYDFINQQNQLKEYNLKADRNYRYLRVPPEVPPSKLKYRRDDPEGNVERYREFENILRDIDFNHKQLETVRKVLAAILNIGNIRFRQNGKYAEVENTDIVSRIAELLRVDEKKFMWSLTNFIMVKGGIAERRQYTTEEARDARDAVASTLYSRLVDFIINRINMNMSFPRAVFGDTNAIIIHDMFGFECFNRNGLEQLMINTLNEQMQYHYNQRIFISEMLEMEAEDIDTINLNFYDNKTALDNLLTKPDGLFYIIDDASRSCQDQDLIMDRVSEKHSQFVKKHTATEISVAHYTGRIIYDTRAFTDINRDFVPPEMIETFRSSLDESIMLMFTNQLTKAGNLTMPFEAVQHKDESERKSYALNTLSAGCISQVNNLRTLAANFRFTCLTLLKMLSQNANLGVHFVRCIRADLEYKPRSFHSDVVQQQMKALGVLDTVIARQKGFSSRLPFDEFLRRYQFLAFDFDEPVEMTKDNCRLLFLRLKMEGWALGKTKVFLRYYNDEFLARLYELQVKKVIKVQSMMRALLARKRVKGGKVFKLGKKGPEHHDVAASKIQKAFRGFRDRVRLPPLVNEKSGQLNENTADFIRPFAKKWREKSIFQVLLHYRAARFQDFVNLSQQVHIYNQRMVAGLNKCTRAVPFERINMREVNSSQLGPLPVPIKKMPFRLDQIPFYDTQYMVDPANSISRQAFPNQLLTQHMEDDEPWDSPLQRNPSMTSCALTYNAYKKEQACQTNWDRMGESDNIYNQGYFRDPQQLRRNQMQMNMNAYNNAYNSYNSNYNNQNWGVHRSGSRRNSLKGYAAPPPPPPPMPSSNYYRNNPNQQQRNYQQRSSYPPSDPVRELQNMARNEGDNSEDPPFNFKAMLRKTNYPRGSETNTYDFNNRRGSDSGDQHTFQPPKLRSTGRRYQDDEGYNSSSGNYGVSRKFGQQQRAPTLRQSPASVGRSFEDSNARSFEEAGSYVEEEIAPGITLSGYAVDI.

The Protein kinase domain occupies 16–282 (FEIYEEIAQG…MVEMVEHPFL (267 aa)). Residues 22 to 30 (IAQGVNAKV) and Lys-45 contribute to the ATP site. Asp-145 acts as the Proton acceptor in catalysis. Ser-183 bears the Phosphoserine mark. The region spanning 332–1037 (MYPEDLAALE…FLARLYELQV (706 aa)) is the Myosin motor domain. The interval 913–934 (LTLLKMLSQNANLGVHFVRCIR) is actin-binding. IQ domains follow at residues 1036 to 1065 (QVKKVIKVQSMMRALLARKRVKGGKVFKLG) and 1072 to 1101 (HDVAASKIQKAFRGFRDRVRLPPLVNEKSG). The interval 1043–1271 (VQSMMRALLA…RMGESDNIYN (229 aa)) is interaction with rtp. Residues 1066-1501 (KKGPEHHDVA…ITLSGYAVDI (436 aa)) form a non alpha-helical, C-terminal domain region. Disordered stretches follow at residues 1308-1364 (NWGV…DPVR) and 1390-1473 (KTNY…EDSN). The segment covering 1326–1335 (APPPPPPPMP) has biased composition (pro residues). A compositionally biased stretch (low complexity) spans 1336–1358 (SSNYYRNNPNQQQRNYQQRSSYP). The segment covering 1405 to 1414 (NNRRGSDSGD) has biased composition (basic and acidic residues). A compositionally biased stretch (polar residues) spans 1449–1463 (FGQQQRAPTLRQSPA).

This sequence in the C-terminal section; belongs to the TRAFAC class myosin-kinesin ATPase superfamily. Myosin family. It in the N-terminal section; belongs to the protein kinase superfamily. Ser/Thr protein kinase family. As to quaternary structure, interacts with rtp. Expressed in the phototransducing compartment of photoreceptor cells, the rhabdomeres (at protein level).

The protein localises to the cytoplasm. It is found in the cytoskeleton. Its subcellular location is the nucleus. The protein resides in the membrane. It localises to the cell projection. The protein localises to the rhabdomere membrane. The enzyme catalyses L-seryl-[protein] + ATP = O-phospho-L-seryl-[protein] + ADP + H(+). It carries out the reaction L-threonyl-[protein] + ATP = O-phospho-L-threonyl-[protein] + ADP + H(+). Its function is as follows. Required for photoreceptor cell function. The ninaC proteins combines putative serine/threonine-protein kinase and myosin activities. Essential for the expression and stability of the rtp protein in the photoreceptors. The rtp/ninaC complex is required for stability of inad and inac and the normal termination of phototransduction in the retina. The chain is Neither inactivation nor afterpotential protein C (ninaC) from Drosophila melanogaster (Fruit fly).